The primary structure comprises 423 residues: Putative competence-damage inducible protein (423 aa).

This sequence belongs to the CinA family.

The chain is Putative competence-damage inducible protein from Streptococcus equi subsp. zooepidemicus (strain MGCS10565).